Consider the following 389-residue polypeptide: Ethanolamine-phosphate cytidylyltransferase (389 aa).

Residues 221 to 222 (AF), 229 to 232 (HVDF), Lys-259, 307 to 310 (HGKT), and 336 to 340 (SGNDL) each bind CTP. Phosphothreonine is present on residues Thr-341 and Thr-342.

It belongs to the cytidylyltransferase family.

The enzyme catalyses phosphoethanolamine + CTP + H(+) = CDP-ethanolamine + diphosphate. The protein operates within phospholipid metabolism; phosphatidylethanolamine biosynthesis; phosphatidylethanolamine from ethanolamine: step 2/3. Ethanolamine-phosphate cytidylyltransferase that catalyzes the second step in the synthesis of phosphatidylethanolamine (PE) from ethanolamine via the CDP-ethanolamine pathway. Phosphatidylethanolamine is a dominant inner-leaflet phospholipid in cell membranes, where it plays a role in membrane function by structurally stabilizing membrane-anchored proteins, and participates in important cellular processes such as cell division, cell fusion, blood coagulation, and apoptosis. The chain is Ethanolamine-phosphate cytidylyltransferase (PCYT2) from Bos taurus (Bovine).